Reading from the N-terminus, the 67-residue chain is Phycobilisome 7.8 kDa linker polypeptide, allophycocyanin-associated, core (67 aa).

Residues 1 to 56 (MRMFRITACVPSQTRIRTQRELQNTYFTKLVPYDNWFREQQRIMKMGGKIVKVELA) form the CpcD-like domain.

The protein belongs to the phycobilisome linker protein family.

The protein resides in the cellular thylakoid membrane. Rod linker protein, associated with allophycocyanin. Linker polypeptides determine the state of aggregation and the location of the disk-shaped phycobiliprotein units within the phycobilisome and modulate their spectroscopic properties in order to mediate a directed and optimal energy transfer. The polypeptide is Phycobilisome 7.8 kDa linker polypeptide, allophycocyanin-associated, core (apcC) (Synechocystis sp. (strain PCC 6714) (Aphanocapsa sp. (strain PCC 6714))).